Consider the following 432-residue polypeptide: Probable protein phosphatase 2C 75 (432 aa).

The PPM-type phosphatase domain maps to 44-356 (VACLFTRQGK…DDCAVVCLFL (313 aa)). 4 residues coordinate Mn(2+): Asp-80, Gly-81, Asp-301, and Asp-347. Residues 372–408 (SPRMPALSGITRPNSKRVTPDDVDDGSDSNVSGDERS) are disordered.

Belongs to the PP2C family. The cofactor is Mg(2+). Mn(2+) serves as cofactor.

It catalyses the reaction O-phospho-L-seryl-[protein] + H2O = L-seryl-[protein] + phosphate. It carries out the reaction O-phospho-L-threonyl-[protein] + H2O = L-threonyl-[protein] + phosphate. This is Probable protein phosphatase 2C 75 from Oryza sativa subsp. japonica (Rice).